A 198-amino-acid polypeptide reads, in one-letter code: Glycerol-3-phosphate acyltransferase (198 aa).

The next 5 membrane-spanning stretches (helical) occupy residues 6–26 (MLPVALLIGYLLGSIPFGLIL), 56–78 (LAAATLLGDALKGTAAVIIAGYL), 83–101 (AAMLAGLGAFLGHLFPVWL), 113–133 (IGILIGLLWPYAIFFCLVWLA), and 154–174 (IVLWAFGHTALAALFALLTLL).

Belongs to the PlsY family. In terms of assembly, probably interacts with PlsX.

Its subcellular location is the cell inner membrane. It catalyses the reaction an acyl phosphate + sn-glycerol 3-phosphate = a 1-acyl-sn-glycero-3-phosphate + phosphate. It participates in lipid metabolism; phospholipid metabolism. In terms of biological role, catalyzes the transfer of an acyl group from acyl-phosphate (acyl-PO(4)) to glycerol-3-phosphate (G3P) to form lysophosphatidic acid (LPA). This enzyme utilizes acyl-phosphate as fatty acyl donor, but not acyl-CoA or acyl-ACP. The protein is Glycerol-3-phosphate acyltransferase of Bradyrhizobium sp. (strain ORS 278).